A 504-amino-acid chain; its full sequence is UDP-N-acetylmuramoylalanine--D-glutamate ligase (504 aa).

129-135 contributes to the ATP binding site; that stretch reads GTNGKTT.

Belongs to the MurCDEF family.

It is found in the cytoplasm. The enzyme catalyses UDP-N-acetyl-alpha-D-muramoyl-L-alanine + D-glutamate + ATP = UDP-N-acetyl-alpha-D-muramoyl-L-alanyl-D-glutamate + ADP + phosphate + H(+). Its pathway is cell wall biogenesis; peptidoglycan biosynthesis. In terms of biological role, cell wall formation. Catalyzes the addition of glutamate to the nucleotide precursor UDP-N-acetylmuramoyl-L-alanine (UMA). The protein is UDP-N-acetylmuramoylalanine--D-glutamate ligase of Burkholderia mallei (strain NCTC 10247).